A 375-amino-acid polypeptide reads, in one-letter code: Anhydro-N-acetylmuramic acid kinase (375 aa).

Position 12–19 (12–19 (GTSLDGVD)) interacts with ATP.

It belongs to the anhydro-N-acetylmuramic acid kinase family.

It carries out the reaction 1,6-anhydro-N-acetyl-beta-muramate + ATP + H2O = N-acetyl-D-muramate 6-phosphate + ADP + H(+). It participates in amino-sugar metabolism; 1,6-anhydro-N-acetylmuramate degradation. Its pathway is cell wall biogenesis; peptidoglycan recycling. Its function is as follows. Catalyzes the specific phosphorylation of 1,6-anhydro-N-acetylmuramic acid (anhMurNAc) with the simultaneous cleavage of the 1,6-anhydro ring, generating MurNAc-6-P. Is required for the utilization of anhMurNAc either imported from the medium or derived from its own cell wall murein, and thus plays a role in cell wall recycling. This Mannheimia succiniciproducens (strain KCTC 0769BP / MBEL55E) protein is Anhydro-N-acetylmuramic acid kinase.